Consider the following 168-residue polypeptide: Ribosome maturation factor RimM (168 aa).

In terms of domain architecture, PRC barrel spans 96–168 (EDEYFITDLI…VMIVRLLEGL (73 aa)).

The protein belongs to the RimM family. As to quaternary structure, binds ribosomal protein uS19.

Its subcellular location is the cytoplasm. In terms of biological role, an accessory protein needed during the final step in the assembly of 30S ribosomal subunit, possibly for assembly of the head region. Essential for efficient processing of 16S rRNA. May be needed both before and after RbfA during the maturation of 16S rRNA. It has affinity for free ribosomal 30S subunits but not for 70S ribosomes. The protein is Ribosome maturation factor RimM of Caldanaerobacter subterraneus subsp. tengcongensis (strain DSM 15242 / JCM 11007 / NBRC 100824 / MB4) (Thermoanaerobacter tengcongensis).